Here is a 53-residue protein sequence, read N- to C-terminus: HOXB-AS3 peptide (53 aa).

Positions 1–53 are disordered; sequence MPVLPGTQRYPHQRRRFQAAGGGAESGKRGSEEAPGVAWSGSESGRDAATPAW.

As to quaternary structure, interacts with HNRNPA1 (via the RGG-box). Interacts with IGF2BP2.

Functionally, blocks the binding of HNRNPA1 to the intronic sequences flanking exon 9 of the PKM gene by competitively binding to the HNRNPA1 RGG-box motif. This inhibits inclusion of exon 9 and promotes inclusion of exon 10, suppressing formation of the PKM M2 isoform and promoting production of the M1 isoform. Also suppresses HNRNPA1-mediated processing of microRNA 18a (miR-18a). Promotes MYC stability through interaction with IGF2BP2. This is HOXB-AS3 peptide from Homo sapiens (Human).